A 916-amino-acid chain; its full sequence is Calcium homeostasis endoplasmic reticulum protein (916 aa).

Met1 carries the N-acetylmethionine modification. The stretch at 15–57 is one SURP motif repeat; it reads VIDKLAQFVARNGPEFEKMTMEKQKDNPKFSFLFGGEFYSYYK. An N6-acetyllysine modification is found at Lys18. The CID domain maps to 149 to 289; that stretch reads ETQLDMNEFD…QLQSPALGLG (141 aa). 2 disordered regions span residues 336 to 549 and 601 to 635; these read QQQQ…RFPP and HPPWAGPQHPDFGPPPHGFNGQPPHMRRQGPPHIN. The segment covering 354–374 has biased composition (pro residues); that stretch reads TPPPPAPPPAPAPAPAIPPTT. The segment covering 480 to 501 has biased composition (polar residues); sequence WNNQPDAAWNSQFEGPWNSQHE. Over residues 525 to 541 the composition is skewed to pro residues; sequence PFPPHQQHPQFNQPPHP. Tyr714 is subject to Phosphotyrosine. The disordered stretch occupies residues 722-878; sequence RARRRKGQEK…DPIKGGDVRD (157 aa). Residues 739–749 show a composition bias toward basic residues; sequence SRSRSKSRGRS. Residues 750–766 are compositionally biased toward low complexity; sequence SSRSNSRSSKSSGSYSR. Basic residues predominate over residues 767–815; sequence SRSRSCSRSYSRSRSRSRSRSRSSRSRSRSQSRSRSKSYSPGRRRRSRS. Phosphoserine occurs at positions 813, 815, and 817. The residue at position 819 (Thr819) is a Phosphothreonine. The residue at position 828 (Ser828) is a Phosphoserine. The G-patch domain maps to 841–891; the sequence is EENKGHQMLVKMGWSGSGGLGAKEQGIQDPIKGGDVRDKWDQYKGVGVALD. Lys844 participates in a covalent cross-link: Glycyl lysine isopeptide (Lys-Gly) (interchain with G-Cter in SUMO2). Ser855 and Ser857 each carry phosphoserine. Lys872 participates in a covalent cross-link: Glycyl lysine isopeptide (Lys-Gly) (interchain with G-Cter in SUMO2). At Lys879 the chain carries N6-acetyllysine. The residue at position 904 (Ser904) is a Phosphoserine.

In terms of tissue distribution, expressed in brain, placenta, lung, liver, kidney, pancreas, cardiac and skeletal muscle, and in cultured HEL and Dami cells.

It is found in the cytoplasm. Its subcellular location is the perinuclear region. The protein localises to the endoplasmic reticulum. Functionally, involved in calcium homeostasis, growth and proliferation. This is Calcium homeostasis endoplasmic reticulum protein from Homo sapiens (Human).